Consider the following 962-residue polypeptide: UBP9-binding protein bun107 (962 aa).

WD repeat units lie at residues 25-69 (DANC…GKAS), 77-116 (AHSA…ASCL), 121-162 (EHTD…EVMR), 172-211 (VVGP…RITD), 214-253 (GHTD…CLFS), and 302-339 (KQDA…NQDV). The segment covering 568–578 (SPLRIRSRPSP) has biased composition (low complexity). Disordered regions lie at residues 568-615 (SPLR…QIPS) and 702-758 (RAAS…PREL). A compositionally biased stretch (polar residues) spans 707-723 (RVFSTGTSVTSPQALSK). The residue at position 717 (Ser-717) is a Phosphoserine. Over residues 724-738 (TNNTVNNAANTENNT) the composition is skewed to low complexity.

As to quaternary structure, interacts with ubp9 and bun62.

It is found in the cytoplasm. The protein localises to the cell tip. Functionally, required for the ubp9 recruitment to septa and cell tips but also for its enzymatic activity at these specific locations. In Schizosaccharomyces pombe (strain 972 / ATCC 24843) (Fission yeast), this protein is UBP9-binding protein bun107 (bun107).